We begin with the raw amino-acid sequence, 343 residues long: 4-hydroxy-2-oxovalerate aldolase 1 (343 aa).

The Pyruvate carboxyltransferase domain occupies 8–260 (VTVHDMTLRD…ETGVDVAKIT (253 aa)). 16–17 (RD) contributes to the substrate binding site. Mn(2+) is bound at residue D17. Residue H20 is the Proton acceptor of the active site. Residues S170 and H199 each coordinate substrate. H199 and H201 together coordinate Mn(2+). Y290 contributes to the substrate binding site.

Belongs to the 4-hydroxy-2-oxovalerate aldolase family.

It catalyses the reaction (S)-4-hydroxy-2-oxopentanoate = acetaldehyde + pyruvate. The chain is 4-hydroxy-2-oxovalerate aldolase 1 from Dechloromonas aromatica (strain RCB).